We begin with the raw amino-acid sequence, 172 residues long: uncharacterized protein (172 aa).

The next 4 membrane-spanning stretches (helical) occupy residues 20–40, 48–68, 76–96, and 146–166; these read LVLITISIIALSTAYIAEYIF, CVYERFPYLMLIKISLTALII, LILILITILSSCILSTYHSFV, and MTEYNLLLNICLLIFLGLILF.

The protein localises to the cell membrane. This is an uncharacterized protein from Rickettsia prowazekii (strain Madrid E).